The sequence spans 170 residues: Acetolactate synthase small subunit (170 aa).

The region spanning 9–83 (TLSVLVEDKP…NVIKIVEQEE (75 aa)) is the ACT domain. Residue lysine 46 forms an Isoglutamyl lysine isopeptide (Lys-Gln) (interchain with Q-Cter in protein Pup) linkage.

The protein belongs to the acetolactate synthase small subunit family. As to quaternary structure, dimer of large and small chains.

The catalysed reaction is 2 pyruvate + H(+) = (2S)-2-acetolactate + CO2. It functions in the pathway amino-acid biosynthesis; L-isoleucine biosynthesis; L-isoleucine from 2-oxobutanoate: step 1/4. Its pathway is amino-acid biosynthesis; L-valine biosynthesis; L-valine from pyruvate: step 1/4. The sequence is that of Acetolactate synthase small subunit (ilvH) from Mycolicibacterium smegmatis (strain ATCC 700084 / mc(2)155) (Mycobacterium smegmatis).